We begin with the raw amino-acid sequence, 114 residues long: Large ribosomal subunit protein bL19 (114 aa).

This sequence belongs to the bacterial ribosomal protein bL19 family.

This protein is located at the 30S-50S ribosomal subunit interface and may play a role in the structure and function of the aminoacyl-tRNA binding site. This is Large ribosomal subunit protein bL19 from Thermobifida fusca (strain YX).